An 806-amino-acid polypeptide reads, in one-letter code: Mitochondrial intermediate peptidase (806 aa).

The N-terminal 29 residues, 1-29 (MLSRHLTVLRSACRVSHDLRVPSTQAVRK), are a transit peptide targeting the mitochondrion. His581 provides a ligand contact to Zn(2+). Residue Glu582 is part of the active site. Residues His585 and His588 each coordinate Zn(2+).

Belongs to the peptidase M3 family. Zn(2+) is required as a cofactor.

It localises to the mitochondrion matrix. The enzyme catalyses Release of an N-terminal octapeptide as second stage of processing of some proteins imported into the mitochondrion.. Cleaves proteins, imported into the mitochondrion, to their mature size. While most mitochondrial precursor proteins are processed to the mature form in one step by mitochondrial processing peptidase (MPP), the sequential cleavage by MIP of an octapeptide after initial processing by MPP is a required step for a subgroup of nuclear-encoded precursor proteins destined for the matrix or the inner membrane. This chain is Mitochondrial intermediate peptidase (OCT1), found in Malassezia globosa (strain ATCC MYA-4612 / CBS 7966) (Dandruff-associated fungus).